Consider the following 121-residue polypeptide: Ribonuclease P protein component (121 aa).

It belongs to the RnpA family. Consists of a catalytic RNA component (M1 or rnpB) and a protein subunit.

The catalysed reaction is Endonucleolytic cleavage of RNA, removing 5'-extranucleotides from tRNA precursor.. Functionally, RNaseP catalyzes the removal of the 5'-leader sequence from pre-tRNA to produce the mature 5'-terminus. It can also cleave other RNA substrates such as 4.5S RNA. The protein component plays an auxiliary but essential role in vivo by binding to the 5'-leader sequence and broadening the substrate specificity of the ribozyme. The sequence is that of Ribonuclease P protein component from Chromobacterium violaceum (strain ATCC 12472 / DSM 30191 / JCM 1249 / CCUG 213 / NBRC 12614 / NCIMB 9131 / NCTC 9757 / MK).